A 395-amino-acid chain; its full sequence is Phosphoglycerate kinase (395 aa).

Residues 20 to 22 (DFN), R36, 59 to 62 (HLGR), R120, and R157 contribute to the substrate site. ATP is bound by residues K208, G296, E327, and 353 to 356 (GGDT).

Belongs to the phosphoglycerate kinase family. As to quaternary structure, monomer.

The protein localises to the cytoplasm. It carries out the reaction (2R)-3-phosphoglycerate + ATP = (2R)-3-phospho-glyceroyl phosphate + ADP. It functions in the pathway carbohydrate degradation; glycolysis; pyruvate from D-glyceraldehyde 3-phosphate: step 2/5. The sequence is that of Phosphoglycerate kinase from Tropheryma whipplei (strain Twist) (Whipple's bacillus).